A 428-amino-acid chain; its full sequence is Adenylosuccinate synthetase (428 aa).

Residues 12-18 (GDEGKGK) and 40-42 (GHT) contribute to the GTP site. The Proton acceptor role is filled by D13. Mg(2+) is bound by residues D13 and G40. IMP-binding positions include 13-16 (DEGK), 38-41 (NAGH), T130, R144, Q225, T240, and R304. H41 serves as the catalytic Proton donor. 300-306 (VTTGRAR) serves as a coordination point for substrate. GTP contacts are provided by residues R306, 332–334 (KID), and 414–416 (SVG).

It belongs to the adenylosuccinate synthetase family. Homodimer. Requires Mg(2+) as cofactor.

Its subcellular location is the cytoplasm. It catalyses the reaction IMP + L-aspartate + GTP = N(6)-(1,2-dicarboxyethyl)-AMP + GDP + phosphate + 2 H(+). It participates in purine metabolism; AMP biosynthesis via de novo pathway; AMP from IMP: step 1/2. In terms of biological role, plays an important role in the de novo pathway of purine nucleotide biosynthesis. Catalyzes the first committed step in the biosynthesis of AMP from IMP. This Clostridium botulinum (strain 657 / Type Ba4) protein is Adenylosuccinate synthetase.